A 307-amino-acid chain; its full sequence is Membrane protein insertase YidC 2 (307 aa).

The first 23 residues, 1 to 23 (MKLTLNRILFSGLALSILFTLTG), serve as a signal peptide directing secretion. A lipid anchor (N-palmitoyl cysteine) is attached at C24. A lipid anchor (S-diacylglycerol cysteine) is attached at C24. 5 helical membrane-spanning segments follow: residues 58 to 78 (LGYG…ILPL), 135 to 155 (LGGI…AMYF), 179 to 199 (VLTA…MMAV), 209 to 225 (TMMY…SFSL), and 231 to 251 (LYWL…TYLL). Positions 263-307 (YAKNPPKAYQSTSSRKDVTPSQNMEQANLPKKIKSNRNAGKQRKR) are disordered. Over residues 271-288 (YQSTSSRKDVTPSQNMEQ) the composition is skewed to polar residues. Over residues 293 to 307 (KKIKSNRNAGKQRKR) the composition is skewed to basic residues.

It belongs to the OXA1/ALB3/YidC family. Type 2 subfamily.

Its subcellular location is the cell membrane. In terms of biological role, required for the insertion and/or proper folding and/or complex formation of integral membrane proteins into the membrane. Involved in integration of membrane proteins that insert both dependently and independently of the Sec translocase complex, as well as at least some lipoproteins. This chain is Membrane protein insertase YidC 2, found in Streptococcus pyogenes serotype M3 (strain ATCC BAA-595 / MGAS315).